The following is a 189-amino-acid chain: Elongation factor P (189 aa).

An N6-(3,6-diaminohexanoyl)-5-hydroxylysine modification is found at Lys34.

The protein belongs to the elongation factor P family. Post-translationally, may be beta-lysylated on the epsilon-amino group of Lys-34 by the combined action of EpmA and EpmB, and then hydroxylated on the C5 position of the same residue by EpmC (if this protein is present). Lysylation is critical for the stimulatory effect of EF-P on peptide-bond formation. The lysylation moiety may extend toward the peptidyltransferase center and stabilize the terminal 3-CCA end of the tRNA. Hydroxylation of the C5 position on Lys-34 may allow additional potential stabilizing hydrogen-bond interactions with the P-tRNA.

It is found in the cytoplasm. The protein operates within protein biosynthesis; polypeptide chain elongation. In terms of biological role, involved in peptide bond synthesis. Alleviates ribosome stalling that occurs when 3 or more consecutive Pro residues or the sequence PPG is present in a protein, possibly by augmenting the peptidyl transferase activity of the ribosome. Modification of Lys-34 is required for alleviation. In Francisella tularensis subsp. tularensis (strain FSC 198), this protein is Elongation factor P.